The sequence spans 226 residues: ATP synthase subunit a 1 (226 aa).

The next 5 membrane-spanning stretches (helical) occupy residues 20 to 40 (LTIVTTWAVMLLLAGGSWLIT), 78 to 98 (YLPFIATLFLFIATANLCTVI), 113 to 133 (ALALSVFIAVPLFGIAESGLV), 174 to 194 (MILVILLTISPLVFPVLMNIL), and 196 to 216 (LLTGMVQAYIFSILATVYIAA).

It belongs to the ATPase A chain family. As to quaternary structure, F-type ATPases have 2 components, CF(1) - the catalytic core - and CF(0) - the membrane proton channel. CF(1) has five subunits: alpha(3), beta(3), gamma(1), delta(1), epsilon(1). CF(0) has four main subunits: a, b, b' and c.

Its subcellular location is the cell inner membrane. Functionally, key component of the proton channel; it plays a direct role in the translocation of protons across the membrane. This chain is ATP synthase subunit a 1, found in Chlorobaculum parvum (strain DSM 263 / NCIMB 8327) (Chlorobium vibrioforme subsp. thiosulfatophilum).